A 167-amino-acid polypeptide reads, in one-letter code: Epithelial membrane protein 2 (167 aa).

Residues 1 to 21 form a helical membrane-spanning segment; that stretch reads MLVLLAFIIAFHITSAALLFI. Asn44, Asn47, and Asn52 each carry an N-linked (GlcNAc...) asparagine glycan. A run of 3 helical transmembrane segments spans residues 67 to 87, 95 to 115, and 143 to 163; these read TMIL…LQLF, FVLT…AASI, and YILA…YLIL.

This sequence belongs to the PMP-22/EMP/MP20 family. As to quaternary structure, interacts with PTK2; regulates PTK2 activation and localization. Interacts with ITGB3; regulates the levels of the heterodimer ITGA5-ITGB3 integrin surface expression. Interacts with P2RX7 (via C-terminus). Interacts with ITGB1; the interaction may be direct or indirect and ITGB1 has a heterodimer form.

The protein resides in the golgi apparatus membrane. The protein localises to the cell membrane. It is found in the apical cell membrane. It localises to the membrane raft. Its subcellular location is the cytoplasm. The protein resides in the nucleus. The protein localises to the perinuclear region. Functions as a key regulator of cell membrane composition by regulating protein surface expression. Also, plays a role in regulation of processes including cell migration, cell proliferation, cell contraction and cell adhesion. Regulates transepithelial migration of neutrophils into the alveolar lumen, potentially via mediation of cell surface expression of adhesion markers and lipid raft formation. Negatively regulates caveolae formation by reducing CAV1 expression and CAV1 amount by increasing lysosomal degradation. Facilitates surface trafficking and the formation of lipid rafts bearing GPI-anchor proteins. Regulates surface expression of MHC1 and ICAM1 proteins increasing susceptibility to T-cell mediated cytotoxicity. Regulates the plasma membrane expression of the integrin heterodimers ITGA6-ITGB1, ITGA5-ITGB3 and ITGA5-ITGB1 resulting in modulation of cell-matrix adhesion. Also regulates many processes through PTK2. Regulates blood vessel endothelial cell migration and angiogenesis by regulating VEGF protein expression through PTK2 activation. Regulates cell migration and cell contraction through PTK2 and SRC activation. Regulates focal adhesion density, F-actin conformation and cell adhesion capacity through interaction with PTK2. Positively regulates cell proliferation. Plays a role during cell death and cell blebbing. Promotes angiogenesis and vasculogenesis through induction of VEGFA via a HIF1A-dependent pathway. Also plays a role in embryo implantation by regulating surface trafficking of integrin heterodimer ITGA5-ITGB3. Plays a role in placental angiogenesis and uterine natural killer cell regulation at the maternal-fetal placental interface, however not required in the maternal tissues for a viable pregnancy. Involved in the early stages of embryogenic development and cardiogenesis, potentially via regulation of epithelial-mesenchymal transition timing. May play a role in glomerular filtration. In Pan troglodytes (Chimpanzee), this protein is Epithelial membrane protein 2 (EMP2).